Consider the following 339-residue polypeptide: Adenylosuccinate synthetase (339 aa).

GTP is bound by residues 12–18 and 42–44; these read GDEGKGS and GHS. Catalysis depends on aspartate 13, which acts as the Proton acceptor. Positions 13 and 42 each coordinate Mg(2+). IMP is bound by residues 13–16, 40–43, threonine 127, arginine 141, glutamine 179, threonine 194, and arginine 256; these read DEGK and NAGH. Histidine 43 functions as the Proton donor in the catalytic mechanism. Residue 252–258 participates in substrate binding; that stretch reads TVTGRRR. GTP-binding positions include arginine 258, 284-286, and 324-326; these read MLD and KTG.

This sequence belongs to the adenylosuccinate synthetase family. Homodimer. Mg(2+) is required as a cofactor.

The protein localises to the cytoplasm. The catalysed reaction is IMP + L-aspartate + GTP = N(6)-(1,2-dicarboxyethyl)-AMP + GDP + phosphate + 2 H(+). It functions in the pathway purine metabolism; AMP biosynthesis via de novo pathway; AMP from IMP: step 1/2. Its function is as follows. Plays an important role in the de novo pathway of purine nucleotide biosynthesis. Catalyzes the first committed step in the biosynthesis of AMP from IMP. The polypeptide is Adenylosuccinate synthetase (Pyrococcus horikoshii (strain ATCC 700860 / DSM 12428 / JCM 9974 / NBRC 100139 / OT-3)).